Here is a 420-residue protein sequence, read N- to C-terminus: uncharacterized protein (420 aa).

Belongs to the Rv1128c/1148c/1588c/1702c/1945/3466 family.

This is an uncharacterized protein from Mycobacterium tuberculosis (strain CDC 1551 / Oshkosh).